The primary structure comprises 291 residues: 3-methylcatechol 2,3-dioxygenase (291 aa).

2 consecutive VOC domains span residues 5–119 and 143–264; these read RLGY…IYYG and GLGH…YGWG. Positions 146, 210, and 260 each coordinate Fe cation.

The protein belongs to the extradiol ring-cleavage dioxygenase family. In terms of assembly, homooctamer. Requires Fe(2+) as cofactor.

It carries out the reaction 3-methylcatechol + O2 = 2-hydroxy-6-oxo-2,4-heptadienoate + H(+). It functions in the pathway xenobiotic degradation; toluene degradation. In Pseudomonas putida (strain ATCC 700007 / DSM 6899 / JCM 31910 / BCRC 17059 / LMG 24140 / F1), this protein is 3-methylcatechol 2,3-dioxygenase (todE).